The primary structure comprises 328 residues: Phosphate acyltransferase (328 aa).

Belongs to the PlsX family. As to quaternary structure, homodimer. Probably interacts with PlsY.

The protein localises to the cytoplasm. The catalysed reaction is a fatty acyl-[ACP] + phosphate = an acyl phosphate + holo-[ACP]. It functions in the pathway lipid metabolism; phospholipid metabolism. In terms of biological role, catalyzes the reversible formation of acyl-phosphate (acyl-PO(4)) from acyl-[acyl-carrier-protein] (acyl-ACP). This enzyme utilizes acyl-ACP as fatty acyl donor, but not acyl-CoA. The chain is Phosphate acyltransferase from Staphylococcus haemolyticus (strain JCSC1435).